We begin with the raw amino-acid sequence, 395 residues long: Putative pyridoxal phosphate-dependent acyltransferase (395 aa).

Gly110–Phe111 contributes to the pyridoxal 5'-phosphate binding site. His135 contributes to the substrate binding site. Pyridoxal 5'-phosphate contacts are provided by residues Ser185, Asp210–His213, and Thr240–Lys243. N6-(pyridoxal phosphate)lysine is present on Lys243. Residue Thr357 participates in substrate binding.

This sequence belongs to the class-II pyridoxal-phosphate-dependent aminotransferase family. As to quaternary structure, homodimer. Pyridoxal 5'-phosphate is required as a cofactor.

This is Putative pyridoxal phosphate-dependent acyltransferase from Staphylococcus aureus (strain MRSA252).